A 721-amino-acid chain; its full sequence is MQTQLGENDISLPQYYNNRELSWLDFNYRVLQEAYDKNNPLLEKLNFISIFSSNLDEFFMVRVAGLKDQVKMGYDKPENKAQMTPQEQVDAIQEKAKKYVDTQYERYNELMIELKDYEIVMCEPHELSEPLLSKLERDFKLTILPTLTPLGIDAYHPFPKLNNKSLNIFVDIDTEDAINSAIVQIPSLIPRFLTYNEGAKQYVVMVEDVITYFINYLFTGYEVLNTFTFRITRNADLTIHEDGAEDLLIEIERFLKERKSGSAVRLEVDGRTENPDDLDWLIETLEVDKQDVYFLNGPLDLTFIFGLVDHLSHKLNYLTYEKYSPQIPRSLGNNNLYELALKRDIFFHHPYESFEPIVDFIREAADDPNTIAIKQTLYRVSKDSPIIKSLKEAAEKGKQVTVLVELKARFDEENNVHWARMLEDAGCHVIYGMTHLKTHSKIALVVKRIGGELTSFVHLGTGNYNDKTAKLYTDMGIITTNEQIAEDAINFFNYLSGYSVKPEYNKLIVAPFDIRDVFIDRIDKEISSHLQHGNGKIMMKMNSLTDKAIIEKLFEASQAGVKIQLIIRGICCLKPGIPGISENIEVVSIVGRLLEHSRIYYFHNNGDERIYLSSADVMTRNMIKRVEILFPVEDKEIGKRLVDFMDLQLSDNQKGRYQDEHGHYHYVENNLSPLNSQVYLMQEAIKYGQELKKRSAQPSGMPVVSKRRANWMNRIRRSLKK.

Asn-54 is an ATP binding site. Mg(2+) is bound by residues Arg-379 and Arg-409. Positions Thr-434 to Thr-468 constitute a PLD phosphodiesterase domain. Residue His-439 is the Phosphohistidine intermediate of the active site. Residues Tyr-472, Arg-568, and His-596 each contribute to the ATP site.

This sequence belongs to the polyphosphate kinase 1 (PPK1) family. Mg(2+) serves as cofactor. Post-translationally, an intermediate of this reaction is the autophosphorylated ppk in which a phosphate is covalently linked to a histidine residue through a N-P bond.

The catalysed reaction is [phosphate](n) + ATP = [phosphate](n+1) + ADP. In terms of biological role, catalyzes the reversible transfer of the terminal phosphate of ATP to form a long-chain polyphosphate (polyP). In Staphylococcus haemolyticus (strain JCSC1435), this protein is Polyphosphate kinase.